A 706-amino-acid chain; its full sequence is DNA ligase (706 aa).

Positions 1-20 are disordered; sequence MSATAGTADESGVASAAASA. NAD(+) is bound by residues 50–54, 99–100, and E128; these read DAEYD and SL. The N6-AMP-lysine intermediate role is filled by K130. NAD(+)-binding residues include R151, E188, K304, and K328. C422, C425, C440, and C446 together coordinate Zn(2+). The BRCT domain maps to 604–694; that stretch reads EGPRPLDGVT…VDAASKLAVP (91 aa).

This sequence belongs to the NAD-dependent DNA ligase family. LigA subfamily. It depends on Mg(2+) as a cofactor. Requires Mn(2+) as cofactor.

The enzyme catalyses NAD(+) + (deoxyribonucleotide)n-3'-hydroxyl + 5'-phospho-(deoxyribonucleotide)m = (deoxyribonucleotide)n+m + AMP + beta-nicotinamide D-nucleotide.. In terms of biological role, DNA ligase that catalyzes the formation of phosphodiester linkages between 5'-phosphoryl and 3'-hydroxyl groups in double-stranded DNA using NAD as a coenzyme and as the energy source for the reaction. It is essential for DNA replication and repair of damaged DNA. This chain is DNA ligase, found in Frankia casuarinae (strain DSM 45818 / CECT 9043 / HFP020203 / CcI3).